The following is a 106-amino-acid chain: Iron-sulfur cluster assembly protein CyaY (106 aa).

This sequence belongs to the frataxin family.

In terms of biological role, involved in iron-sulfur (Fe-S) cluster assembly. May act as a regulator of Fe-S biogenesis. This chain is Iron-sulfur cluster assembly protein CyaY, found in Colwellia psychrerythraea (strain 34H / ATCC BAA-681) (Vibrio psychroerythus).